We begin with the raw amino-acid sequence, 296 residues long: Homoserine kinase (296 aa).

84–94 is a binding site for ATP; the sequence is PLARGLGSSSS.

It belongs to the GHMP kinase family. Homoserine kinase subfamily.

The protein localises to the cytoplasm. It carries out the reaction L-homoserine + ATP = O-phospho-L-homoserine + ADP + H(+). The protein operates within amino-acid biosynthesis; L-threonine biosynthesis; L-threonine from L-aspartate: step 4/5. Functionally, catalyzes the ATP-dependent phosphorylation of L-homoserine to L-homoserine phosphate. This Lactococcus lactis subsp. lactis (strain IL1403) (Streptococcus lactis) protein is Homoserine kinase.